A 117-amino-acid polypeptide reads, in one-letter code: MPLIPPPNPQKTYQIAVLALGLVLLLAFVLISDHSPKVGDHLHNLPFGGEYKDGTKTIKYFQRPNQHSLSKTLAKSHNTTIFLIILGLIGTLHGLHYFSNNRRISSSLHCVLCQNKH.

Residues 1 to 11 (MPLIPPPNPQK) lie on the Cytoplasmic side of the membrane. A helical membrane pass occupies residues 12 to 32 (TYQIAVLALGLVLLLAFVLIS). Topologically, residues 33–78 (DHSPKVGDHLHNLPFGGEYKDGTKTIKYFQRPNQHSLSKTLAKSHN) are lumenal. A helical membrane pass occupies residues 79–99 (TTIFLIILGLIGTLHGLHYFS). Residues 100–117 (NNRRISSSLHCVLCQNKH) are Cytoplasmic-facing.

Belongs to the Tymovirales TGBp2 protein family.

The protein resides in the host endoplasmic reticulum membrane. In terms of biological role, plays a role in viral cell-to-cell propagation, by facilitating genome transport to neighboring plant cells through plasmosdesmata,. The polypeptide is Movement protein TGB2 (Trifolium (WCMV)).